A 364-amino-acid polypeptide reads, in one-letter code: Fructose-bisphosphate aldolase C (364 aa).

Position 5 is a phosphotyrosine (tyrosine 5). Phosphoserine is present on residues serine 36, serine 39, and serine 45. Arginine 56 is a binding site for substrate. Lysine 111 bears the N6-acetyllysine mark. The residue at position 132 (serine 132) is a Phosphoserine. Lysine 147 is a binding site for substrate. Catalysis depends on glutamate 188, which acts as the Proton acceptor. Lysine 230 functions as the Schiff-base intermediate with dihydroxyacetone-P in the catalytic mechanism.

The protein belongs to the class I fructose-bisphosphate aldolase family. As to quaternary structure, homotetramer. Interacts with ATP6V1E1. May interact with PLD2.

The enzyme catalyses beta-D-fructose 1,6-bisphosphate = D-glyceraldehyde 3-phosphate + dihydroxyacetone phosphate. It participates in carbohydrate degradation; glycolysis; D-glyceraldehyde 3-phosphate and glycerone phosphate from D-glucose: step 4/4. This is Fructose-bisphosphate aldolase C (ALDOC) from Homo sapiens (Human).